A 254-amino-acid polypeptide reads, in one-letter code: Glutamate racemase (254 aa).

Residues 10–11 (DS) and 42–43 (YG) contribute to the substrate site. C73 acts as the Proton donor/acceptor in catalysis. Residue 74 to 75 (NT) participates in substrate binding. C183 serves as the catalytic Proton donor/acceptor. 184 to 185 (TH) lines the substrate pocket.

This sequence belongs to the aspartate/glutamate racemases family.

It catalyses the reaction L-glutamate = D-glutamate. It functions in the pathway cell wall biogenesis; peptidoglycan biosynthesis. Functionally, provides the (R)-glutamate required for cell wall biosynthesis. The sequence is that of Glutamate racemase from Herpetosiphon aurantiacus (strain ATCC 23779 / DSM 785 / 114-95).